A 359-amino-acid chain; its full sequence is MAAVSGLVRRPLREVSRLLKRRFHWTAPAALQVTVRDAINQGMDEELERDEKVFLLGEEVAQYDGAYKVSRGLWKKYGDKRIIDTPISEMGFAGIAVGAAMAGLRPICEFMTFNFSMQAIDQVINSAAKTYYMSGGLQPVPIVFRGPNGASAGVAAQHSQCFAAWYGHCPGLKVVSPWNSEDAKGLIKSAIRDNNPVVVLENELMYGVPFEFPPEAQSKDFLIPIGKAKIERQGTHITVVSHSRPVGHCLEAAAVLSKEGVECEVINMRTIRPMDMETIEASVMKTNHLVTVEGGWPQFGVGAEICARIMEGPAFNFLDAPAVRVTGADVPMPYAKILEDNSIPQVKDIIFAIKKTLNI.

A mitochondrion-targeting transit peptide spans 1-30 (MAAVSGLVRRPLREVSRLLKRRFHWTAPAA). At Tyr67 the chain carries Phosphotyrosine. Position 89 (Glu89) interacts with thiamine diphosphate. K(+) is bound by residues Ile142, Ala190, Ile191, Asp193, and Asn195. Lys354 is modified (N6-acetyllysine).

As to quaternary structure, heterotetramer of two PDHA1 and two PDHB subunits. The heterotetramer interacts with DLAT, and is part of the multimeric pyruvate dehydrogenase complex that contains multiple copies of pyruvate dehydrogenase (E1), dihydrolipoamide acetyltransferase (DLAT, E2) and lipoamide dehydrogenase (DLD, E3). These subunits are bound to an inner core composed of about 48 DLAT and 12 PDHX molecules. Interacts with DLAT. It depends on thiamine diphosphate as a cofactor.

The protein resides in the mitochondrion matrix. It carries out the reaction N(6)-[(R)-lipoyl]-L-lysyl-[protein] + pyruvate + H(+) = N(6)-[(R)-S(8)-acetyldihydrolipoyl]-L-lysyl-[protein] + CO2. The pyruvate dehydrogenase complex catalyzes the overall conversion of pyruvate to acetyl-CoA and CO(2), and thereby links the glycolytic pathway to the tricarboxylic cycle. The chain is Pyruvate dehydrogenase E1 component subunit beta, mitochondrial (PDHB) from Pongo abelii (Sumatran orangutan).